Here is a 399-residue protein sequence, read N- to C-terminus: Subtilisin-like protease 4 (399 aa).

The N-terminal stretch at 1–19 is a signal peptide; sequence MVCLKTLSVFLAAFAVADA. Positions 20-118 are excised as a propeptide; it reads RAVFKTQSNK…VEQDQVVRIS (99 aa). An Inhibitor I9 domain is found at 38–117; it reads YIVVMKDGVS…YVEQDQVVRI (80 aa). Residues 128-399 form the Peptidase S8 domain; sequence SWGLGRVSHR…NRLLYNGSGQ (272 aa). Active-site charge relay system residues include Asp160 and His191. Asn252 carries N-linked (GlcNAc...) asparagine glycosylation. The Charge relay system role is filled by Ser346. A compositionally biased stretch (polar residues) spans 380–392; sequence AISNPGSGTTNRL. Residues 380 to 399 are disordered; the sequence is AISNPGSGTTNRLLYNGSGQ. A glycan (N-linked (GlcNAc...) asparagine) is linked at Asn395.

It belongs to the peptidase S8 family.

It localises to the secreted. Functionally, secreted subtilisin-like serine protease with keratinolytic activity that contributes to pathogenicity. The sequence is that of Subtilisin-like protease 4 (SUB4) from Arthroderma gypseum (strain ATCC MYA-4604 / CBS 118893) (Microsporum gypseum).